Consider the following 461-residue polypeptide: MSSLFRKKPLETLSAQSKSKSLARTLSAFDLTLLGIGCVIGTGIFVITGTVAATGAGPALIISFILAGLACALAAFCYAEFSSSIPISGSVYSYSYVTLGELLAFLIGWDLMLEYVIALSAVATGWSSYFQSLLAGFNLHIPAALTGAPGSMAGAVFNLPAAVIILLITAIVSRGVKESTRFNNVIVLMKIAIILLFIIVGIGYVKPDNWSPFMPFGMKGVILSAATVFFAYLGFDAVSNASEEVKNPQKNMPVGIISALAVCTVLYIAVSLVLTGMMPYAKLNVGDPVSFALKFVGQDAVAGIISVGAIIGITTVMLALLYAQVRLTFAMSRDGLLPGLFAKVHPSFKTPFRNTWLTGIVAAGIAGFINLGTLAHLVNMGTLAAFTVISIAVIVLRKKHPEIKASFRVPFVPVVPIISAGICLWFMYSLPGVTWLSFVIWIAVGTLVYFLYSRKHSLLNK.

Transmembrane regions (helical) follow at residues 33–53 (LLGI…TVAA), 56–76 (AGPA…LAAF), 102–122 (LLAF…LSAV), 152–172 (MAGA…TAIV), 185–205 (VIVL…IGYV), 213–233 (FMPF…FAYL), 254–274 (VGII…SLVL), 301–321 (VAGI…LALL), 355–375 (TWLT…GTLA), 376–396 (HLVN…VIVL), 409–429 (VPFV…FMYS), and 432–452 (GVTW…YFLY).

It belongs to the amino acid-polyamine-organocation (APC) superfamily.

It is found in the cell membrane. Functionally, involved in import of methylthioribose (MTR) into the cell. This is Methylthioribose transporter from Bacillus subtilis (strain 168).